A 370-amino-acid polypeptide reads, in one-letter code: 3-isopropylmalate dehydrogenase (370 aa).

Position 77–90 (77–90 (GPKWDAVPYEVRPE)) interacts with NAD(+). Positions 97, 107, 135, and 226 each coordinate substrate. Residues Asp-226, Asp-250, and Asp-254 each coordinate Mg(2+). 290–302 (GSAPDIAGTGVAN) contributes to the NAD(+) binding site.

This sequence belongs to the isocitrate and isopropylmalate dehydrogenases family. LeuB type 1 subfamily. Homodimer. The cofactor is Mg(2+). Mn(2+) is required as a cofactor.

It localises to the cytoplasm. It carries out the reaction (2R,3S)-3-isopropylmalate + NAD(+) = 4-methyl-2-oxopentanoate + CO2 + NADH. The protein operates within amino-acid biosynthesis; L-leucine biosynthesis; L-leucine from 3-methyl-2-oxobutanoate: step 3/4. In terms of biological role, catalyzes the oxidation of 3-carboxy-2-hydroxy-4-methylpentanoate (3-isopropylmalate) to 3-carboxy-4-methyl-2-oxopentanoate. The product decarboxylates to 4-methyl-2 oxopentanoate. The protein is 3-isopropylmalate dehydrogenase of Rhizobium meliloti (strain 1021) (Ensifer meliloti).